The sequence spans 275 residues: UBX domain-containing protein 8 (275 aa).

A topological domain (cytoplasmic) is located at residue Met-1. The chain crosses the membrane as a helical span at residues 2-22; the sequence is ASRGVVGIFLLSALPLLCLEL. The Lumenal portion of the chain corresponds to 23–33; it reads RRGKPDLGIKD. The chain crosses the membrane as a helical span at residues 34 to 54; it reads LILLCGRIFLLLALLTLIISV. Residues 55 to 275 lie on the Cytoplasmic side of the membrane; that stretch reads TTSWVNSFKP…LNVEEKEQSS (221 aa). A disordered region spans residues 137–181; that stretch reads DEDLELDSESQTSFETSNREAAKRRNLPNSVTNISPPAEQPTKKE. Residues 192–268 enclose the UBX domain; that stretch reads TAEEVVTVAL…GITVDTVLNV (77 aa).

As to quaternary structure, interacts with SYVN1 and VCP.

It localises to the endoplasmic reticulum membrane. Involved in endoplasmic reticulum-associated degradation (ERAD) for misfolded lumenal proteins, possibly by tethering VCP to the endoplasmic reticulum membrane. May play a role in reproduction. Functionally, may play a role in reproduction. This chain is UBX domain-containing protein 8 (UBXN8), found in Bos taurus (Bovine).